Reading from the N-terminus, the 632-residue chain is Phosphomethylpyrimidine synthase (632 aa).

Substrate contacts are provided by residues Asn237, Met266, Tyr295, His331, 351 to 353, 392 to 395, and Glu431; these read SRG and DGLR. Residue His435 participates in Zn(2+) binding. Tyr458 contacts substrate. His499 contributes to the Zn(2+) binding site. [4Fe-4S] cluster contacts are provided by Cys579, Cys582, and Cys587.

This sequence belongs to the ThiC family. Homodimer. Requires [4Fe-4S] cluster as cofactor.

It catalyses the reaction 5-amino-1-(5-phospho-beta-D-ribosyl)imidazole + S-adenosyl-L-methionine = 4-amino-2-methyl-5-(phosphooxymethyl)pyrimidine + CO + 5'-deoxyadenosine + formate + L-methionine + 3 H(+). It functions in the pathway cofactor biosynthesis; thiamine diphosphate biosynthesis. Catalyzes the synthesis of the hydroxymethylpyrimidine phosphate (HMP-P) moiety of thiamine from aminoimidazole ribotide (AIR) in a radical S-adenosyl-L-methionine (SAM)-dependent reaction. The protein is Phosphomethylpyrimidine synthase of Chromobacterium violaceum (strain ATCC 12472 / DSM 30191 / JCM 1249 / CCUG 213 / NBRC 12614 / NCIMB 9131 / NCTC 9757 / MK).